The chain runs to 375 residues: DNA replication and repair protein RecF (375 aa).

Position 30–37 (glycine 30–threonine 37) interacts with ATP.

This sequence belongs to the RecF family.

It is found in the cytoplasm. The RecF protein is involved in DNA metabolism; it is required for DNA replication and normal SOS inducibility. RecF binds preferentially to single-stranded, linear DNA. It also seems to bind ATP. The protein is DNA replication and repair protein RecF of Halothermothrix orenii (strain H 168 / OCM 544 / DSM 9562).